Here is a 620-residue protein sequence, read N- to C-terminus: Synchronized import protein 1 (620 aa).

A disordered region spans residues 1–32 (MGRSKKRSRASSSRLNPLRKAGSNDNNKDTNV). ARM repeat units lie at residues 25–64 (DNNKDTNVVNKKLQPLLQNLSSVVPNDRSIALSSISVLCE), 66–106 (AHMR…NLSL), 181–221 (DDIL…TTLD), 258–299 (ANEL…NIDP), 340–386 (IKLQ…NFLP), 435–470 (DSQDDLSIKIGRMGCIWALLKLIFPDGAFESENRAL), 471–510 (INVQMLNNSGFARGIIEEFQNNNDLELQQKCINVLSTYAM), and 564–607 (RGGF…TLDS).

It belongs to the nuclear import and ribosome assembly adapter family. Forms a heterotrimeric complex with RPL5 and RPL11A or RPL11B; interaction of this complex with KAP104 allows the nuclear import of the heterotrimer. Component of a hexameric 5S RNP precursor complex, composed of 5S RNA, RRS1, RPF2, RPL5, RPL11A/RPL11B and SYO1; this complex acts as a precursor for ribosome assembly.

It is found in the cytoplasm. Its subcellular location is the nucleus. Its function is as follows. Nuclear import adapter that specifically recruits the two functionally and topologically linked ribosomal proteins RPL5 and RPL11 (encoded by RPL11A and RPL11B). Guarantees that this cargo pair remains bound together from the time of synthesis in the cytoplasm until delivery to the nascent 5S rRNA in the nucleus. The polypeptide is Synchronized import protein 1 (SYO1) (Saccharomyces cerevisiae (strain ATCC 204508 / S288c) (Baker's yeast)).